A 793-amino-acid chain; its full sequence is Signal transducer and activator of transcription 5A (793 aa).

At Y90 the chain carries Phosphotyrosine. A Phosphoserine modification is found at S128. Positions 589-686 (WNDGAILGFV…EVFAKYYTPV (98 aa)) constitute an SH2 domain. A phosphotyrosine mark is found at Y682 and Y694. The residue at position 779 (S779) is a Phosphoserine.

This sequence belongs to the transcription factor STAT family. In terms of assembly, forms a homodimer or a heterodimer with a related family member. Interacts with NCOA1 and SOCS7. Binds NR3C1. Interacts with ERBB4. Interacts with EBF4. Interacts with CD69. In terms of processing, ISGylated. Post-translationally, tyrosine phosphorylated in response to KITLG/SCF, IL2, IL3, IL7, IL15, CSF2/GMCSF, GH1, PRL, EPO and THPO. Activated KIT promotes phosphorylation on tyrosine residues and subsequent translocation to the nucleus. Tyrosine phosphorylated in response to constitutively activated FGFR1, FGFR2, FGFR3 and FGFR4. Tyrosine phosphorylation is required for DNA-binding activity and dimerization. Serine phosphorylation is also required for maximal transcriptional activity. Tyrosine phosphorylated in response to signaling via activated FLT3; wild-type FLT3 results in much weaker phosphorylation than constitutively activated mutant FLT3. Alternatively, can be phosphorylated by JAK2 at Tyr-694. In the virgin, found in most tissues except brain and muscle. During lactation, abundantly found in mammary tissue, as well as in other secretory organs such as salivary gland and seminal vesicle.

It is found in the cytoplasm. It localises to the nucleus. In terms of biological role, carries out a dual function: signal transduction and activation of transcription. Mediates cellular responses to the cytokine KITLG/SCF and other growth factors. May mediate cellular responses to activated FGFR1, FGFR2, FGFR3 and FGFR4. Binds to the GAS element and activates PRL-induced transcription. Regulates the expression of milk proteins during lactation. This chain is Signal transducer and activator of transcription 5A (Stat5a), found in Mus musculus (Mouse).